A 512-amino-acid chain; its full sequence is Glutathione-binding protein GsiB (512 aa).

Positions 1–26 (MTQFITHKWLAALGLASSIAAFPALA) are cleaved as a signal peptide.

It belongs to the bacterial solute-binding protein 5 family. As to quaternary structure, the complex is composed of two ATP-binding proteins (GsiA), two transmembrane proteins (GsiC and GsiD) and a solute-binding protein (GsiB).

The protein localises to the periplasm. Its function is as follows. Part of the ABC transporter complex GsiABCD involved in glutathione import. Binds glutathione. The sequence is that of Glutathione-binding protein GsiB from Salmonella typhi.